The chain runs to 365 residues: Alanine racemase (365 aa).

K32 serves as the catalytic Proton acceptor; specific for D-alanine. K32 bears the N6-(pyridoxal phosphate)lysine mark. R128 contacts substrate. Y257 functions as the Proton acceptor; specific for L-alanine in the catalytic mechanism. M305 contacts substrate.

Belongs to the alanine racemase family. Requires pyridoxal 5'-phosphate as cofactor.

It catalyses the reaction L-alanine = D-alanine. Its pathway is amino-acid biosynthesis; D-alanine biosynthesis; D-alanine from L-alanine: step 1/1. Functionally, catalyzes the interconversion of L-alanine and D-alanine. May also act on other amino acids. This Francisella tularensis subsp. novicida (strain U112) protein is Alanine racemase (alr).